A 302-amino-acid chain; its full sequence is RNA polymerase II holoenzyme cyclin-like subunit (302 aa).

The region spanning 53–142 is the Cyclin N-terminal domain; sequence QQLIKLGKRM…LGECEFSLIS (90 aa).

This sequence belongs to the cyclin family. Cyclin C subfamily. In terms of assembly, component of the srb8-11 complex, a regulatory module of the Mediator complex.

The protein resides in the nucleus. In terms of biological role, component of the srb8-11 complex. The srb8-11 complex is a regulatory module of the Mediator complex which is itself involved in regulation of basal and activated RNA polymerase II-dependent transcription. The srb8-11 complex may be involved in the transcriptional repression of a subset of genes regulated by Mediator. It may inhibit the association of the Mediator complex with RNA polymerase II to form the holoenzyme complex. The srb8-11 complex phosphorylates the C-terminal domain (CTD) of the largest subunit of RNA polymerase II. The chain is RNA polymerase II holoenzyme cyclin-like subunit (ssn8) from Aspergillus clavatus (strain ATCC 1007 / CBS 513.65 / DSM 816 / NCTC 3887 / NRRL 1 / QM 1276 / 107).